A 21-amino-acid polypeptide reads, in one-letter code: Peptide PGLa-R4 (21 aa).

A Leucine amide modification is found at leucine 21.

As to expression, expressed by the skin glands.

It localises to the secreted. Antimicrobial peptide. This is Peptide PGLa-R4 from Xenopus ruwenzoriensis (Uganda clawed frog).